The primary structure comprises 300 residues: tRNA dimethylallyltransferase 1 (300 aa).

An ATP-binding site is contributed by 13–20; it reads GPTGVGKT. A substrate-binding site is contributed by 15–20; the sequence is TGVGKT. The tract at residues 38–41 is interaction with substrate tRNA; that stretch reads DSRQ.

Belongs to the IPP transferase family. Monomer. Mg(2+) is required as a cofactor.

It catalyses the reaction adenosine(37) in tRNA + dimethylallyl diphosphate = N(6)-dimethylallyladenosine(37) in tRNA + diphosphate. Catalyzes the transfer of a dimethylallyl group onto the adenine at position 37 in tRNAs that read codons beginning with uridine, leading to the formation of N6-(dimethylallyl)adenosine (i(6)A). This is tRNA dimethylallyltransferase 1 from Porphyromonas gingivalis (strain ATCC BAA-308 / W83).